The sequence spans 155 residues: Ribosome maturation factor RimP (155 aa).

It belongs to the RimP family.

It localises to the cytoplasm. Its function is as follows. Required for maturation of 30S ribosomal subunits. This is Ribosome maturation factor RimP from Synechococcus sp. (strain RCC307).